Reading from the N-terminus, the 718-residue chain is Catalase-peroxidase (718 aa).

Positions 98–219 (WHAAGTYRMG…LAATEMGLIY (122 aa)) form a cross-link, tryptophyl-tyrosyl-methioninium (Trp-Tyr) (with M-245). Catalysis depends on His-99, which acts as the Proton acceptor. Positions 219 to 245 (YVNPEGPQASGDPRSAAPFIRATFGNM) form a cross-link, tryptophyl-tyrosyl-methioninium (Tyr-Met) (with W-98). Heme b is bound at residue His-260.

It belongs to the peroxidase family. Peroxidase/catalase subfamily. As to quaternary structure, homodimer or homotetramer. Requires heme b as cofactor. Formation of the three residue Trp-Tyr-Met cross-link is important for the catalase, but not the peroxidase activity of the enzyme.

It carries out the reaction H2O2 + AH2 = A + 2 H2O. The enzyme catalyses 2 H2O2 = O2 + 2 H2O. Its function is as follows. Bifunctional enzyme with both catalase and broad-spectrum peroxidase activity. The sequence is that of Catalase-peroxidase from Acinetobacter baumannii (strain AB307-0294).